Here is a 102-residue protein sequence, read N- to C-terminus: Carboxysome shell protein CcmK2 (102 aa).

The BMC domain maps to 4–90 (AVGMIETRGF…PHENLEYVLP (87 aa)).

Belongs to the bacterial microcompartments protein family. CcmK subfamily. As to quaternary structure, homohexamer. Stacked hexamers, with the concave faces together, have also been crystallized. Interacts preferentially with itself, then with CcmK1 and CcmK4a in vitro. May interact with CcmL, this occurs at very high CcmK2 concentrations. Interacts with CcmN and CcmO in the carboxysome.

Its subcellular location is the carboxysome. Probably the major shell protein of the carboxysome, a polyhedral inclusion where RuBisCO (ribulose bisphosphate carboxylase, rbcL-rbcS) is sequestered. Assembles into hexamers which make sheets that form the facets of the polyhedral carboxysome. The hexamer central pore probably regulates metabolite flux. In Thermosynechococcus vestitus (strain NIES-2133 / IAM M-273 / BP-1), this protein is Carboxysome shell protein CcmK2.